Consider the following 29-residue polypeptide: Varv peptide D (29 aa).

A cross-link (cyclopeptide (Gly-Asn)) is located at residues 1–29; the sequence is GLPICGETCVGGSCNTPGCSCSWPVCTRN. 3 cysteine pairs are disulfide-bonded: Cys-5-Cys-19, Cys-9-Cys-21, and Cys-14-Cys-26.

This is a cyclic peptide.

Probably participates in a plant defense mechanism. The polypeptide is Varv peptide D (Viola arvensis (European field pansy)).